The sequence spans 369 residues: UDP-N-acetyl-3-dehydro-alpha-D-glucosamine 3-aminotranferase (369 aa).

Lysine 190 bears the N6-(pyridoxal phosphate)lysine mark.

It belongs to the DegT/DnrJ/EryC1 family. Pyridoxal 5'-phosphate is required as a cofactor.

It catalyses the reaction UDP-2-acetamido-3-amino-2,3-dideoxy-alpha-D-glucopyranose + 2-oxoglutarate = UDP-2-acetamido-3-dehydro-2-deoxy-alpha-D-glucopyranose + L-glutamate. Its pathway is bacterial outer membrane biogenesis; LPS lipid A biosynthesis. Aminotranferase involved in the synthesis of 2,3-diamino-2,3-dideoxy-D-glucopyranose (GlcN3N), which is a component of lipid A in some species. Catalyzes the amination of UDP-2-acetamido-3-dehydro-2-deoxy-alpha-D-glucopyranose (UDP-3-oxo-GlcNAc) to UDP-2-acetamido-3-amino-2,3-dideoxy-alpha-D-glucopyranose (UDP-GlcNAc3N), using L-glutamate as the amine donor. Other amine donors, such as alanine and glutamine, can substitute for glutamate, but product formation is slower. In Acidithiobacillus ferrooxidans (strain ATCC 23270 / DSM 14882 / CIP 104768 / NCIMB 8455) (Ferrobacillus ferrooxidans (strain ATCC 23270)), this protein is UDP-N-acetyl-3-dehydro-alpha-D-glucosamine 3-aminotranferase.